We begin with the raw amino-acid sequence, 361 residues long: Phosphoserine aminotransferase (361 aa).

Arg-42 provides a ligand contact to L-glutamate. Pyridoxal 5'-phosphate contacts are provided by residues 76–77 (AR), Trp-102, Thr-153, Asp-173, and Gln-196. Lys-197 carries the post-translational modification N6-(pyridoxal phosphate)lysine. 238 to 239 (NT) is a pyridoxal 5'-phosphate binding site.

It belongs to the class-V pyridoxal-phosphate-dependent aminotransferase family. SerC subfamily. Homodimer. It depends on pyridoxal 5'-phosphate as a cofactor.

The protein localises to the cytoplasm. The enzyme catalyses O-phospho-L-serine + 2-oxoglutarate = 3-phosphooxypyruvate + L-glutamate. It carries out the reaction 4-(phosphooxy)-L-threonine + 2-oxoglutarate = (R)-3-hydroxy-2-oxo-4-phosphooxybutanoate + L-glutamate. Its pathway is amino-acid biosynthesis; L-serine biosynthesis; L-serine from 3-phospho-D-glycerate: step 2/3. It functions in the pathway cofactor biosynthesis; pyridoxine 5'-phosphate biosynthesis; pyridoxine 5'-phosphate from D-erythrose 4-phosphate: step 3/5. Catalyzes the reversible conversion of 3-phosphohydroxypyruvate to phosphoserine and of 3-hydroxy-2-oxo-4-phosphonooxybutanoate to phosphohydroxythreonine. The polypeptide is Phosphoserine aminotransferase (Yersinia pestis (strain Pestoides F)).